Reading from the N-terminus, the 378-residue chain is Mannitol-1-phosphate 5-dehydrogenase (378 aa).

NAD(+) is bound at residue 4-15 (SVHFGAGNIGRG).

The protein belongs to the mannitol dehydrogenase family.

The catalysed reaction is D-mannitol 1-phosphate + NAD(+) = beta-D-fructose 6-phosphate + NADH + H(+). The protein is Mannitol-1-phosphate 5-dehydrogenase of Streptococcus pneumoniae (strain ATCC 700669 / Spain 23F-1).